Here is a 123-residue protein sequence, read N- to C-terminus: Small ribosomal subunit protein uS12cz/uS12cy (123 aa).

The protein belongs to the universal ribosomal protein uS12 family. As to quaternary structure, part of the 30S ribosomal subunit.

It is found in the plastid. The protein resides in the chloroplast. In terms of biological role, with S4 and S5 plays an important role in translational accuracy. Located at the interface of the 30S and 50S subunits. In Glycine max (Soybean), this protein is Small ribosomal subunit protein uS12cz/uS12cy (rps12-A).